A 373-amino-acid polypeptide reads, in one-letter code: NAD-dependent protein deacylase SRT2 (373 aa).

The transit peptide at 1–47 (MNMRRVFGGVSTDLFPSRSMYRPLQSGGNLVMLFKGCRRFVRTTCRV) directs the protein to the mitochondrion. The Deacetylase sirtuin-type domain occupies 75–373 (DPPNMEDIHK…DVGSLSVPAL (299 aa)). Residues 100-120 (GAGVSTECGIPDYRSPNGAYS) and 179-182 (QNVD) contribute to the NAD(+) site. H196 functions as the Proton acceptor in the catalytic mechanism. C204, C207, C271, and C274 together coordinate Zn(2+). Residues 311–313 (GSS), 337–339 (NIG), and V355 contribute to the NAD(+) site.

Belongs to the sirtuin family. Class II subfamily. Binds to the promoter region of genes influenced by ethylene. Interacts with ENAP1; this interaction is enhanced in the presence of ethylene. Zn(2+) serves as cofactor.

Its subcellular location is the mitochondrion matrix. The protein localises to the nucleus. It catalyses the reaction N(6)-acetyl-L-lysyl-[protein] + NAD(+) + H2O = 2''-O-acetyl-ADP-D-ribose + nicotinamide + L-lysyl-[protein]. In terms of biological role, NAD-dependent protein deacylase. Catalyzes the NAD-dependent hydrolysis of acyl groups from lysine residues. Involved in responses to ethylene leading to the transcriptional repression of some ethylene-responsive genes via the regulation of histone acetylation H3K9Ac. Negatively regulates plant basal defense against plant pathogens, possibly by suppressing salicylic acid biosynthesis. In Arabidopsis thaliana (Mouse-ear cress), this protein is NAD-dependent protein deacylase SRT2.